The sequence spans 562 residues: Arylsulfatase H (562 aa).

Positions 15, 16, and 55 each coordinate Ca(2+). The active-site Nucleophile is Cys55. Cys55 bears the 3-oxoalanine (Cys) mark. Lys115 is a substrate binding site. Residue His117 is part of the active site. A run of 2 helical transmembrane segments spans residues 167 to 187 (LWISTAVLSLVPLLLLIPKYA) and 189 to 209 (WFVVPWKVILTFALLAFLFFI). Position 271 (His271) interacts with substrate. Residues Asp323 and Asn324 each coordinate Ca(2+).

It belongs to the sulfatase family. Requires Ca(2+) as cofactor. The conversion to 3-oxoalanine (also known as C-formylglycine, FGly), of a serine or cysteine residue in prokaryotes and of a cysteine residue in eukaryotes, is critical for catalytic activity.

It localises to the membrane. The polypeptide is Arylsulfatase H (ARSH) (Canis lupus familiaris (Dog)).